The following is a 90-amino-acid chain: MNIKPIGERVLLKPIKKEEKTKSGILLSSKSSNTDTQNQAEVIALGKGEKLEGIKVGDKVIFNKFSGNEIEDGDVKYLIVNAEDILAIIG.

The protein belongs to the GroES chaperonin family. In terms of assembly, heptamer of 7 subunits arranged in a ring. Interacts with the chaperonin GroEL.

The protein localises to the cytoplasm. Its function is as follows. Together with the chaperonin GroEL, plays an essential role in assisting protein folding. The GroEL-GroES system forms a nano-cage that allows encapsulation of the non-native substrate proteins and provides a physical environment optimized to promote and accelerate protein folding. GroES binds to the apical surface of the GroEL ring, thereby capping the opening of the GroEL channel. The polypeptide is Co-chaperonin GroES (Fusobacterium nucleatum subsp. nucleatum (strain ATCC 25586 / DSM 15643 / BCRC 10681 / CIP 101130 / JCM 8532 / KCTC 2640 / LMG 13131 / VPI 4355)).